The chain runs to 777 residues: Dynamin-like protein ARC5 (777 aa).

Positions 45-343 (PFEAPAVLVV…LWKRYKESVP (299 aa)) constitute a Dynamin-type G domain. The tract at residues 55 to 62 (GQQTDGKS) is G1 motif. 55 to 62 (GQQTDGKS) is a GTP binding site. The interval 81 to 83 (KTR) is G2 motif. The segment at 160 to 163 (DTPG) is G3 motif. GTP is bound by residues 160–164 (DTPGL) and 231–234 (TKLD). The G4 motif stretch occupies residues 231 to 234 (TKLD). Residues 265–268 (SPFF) form a G5 motif region. 2 coiled-coil regions span residues 300–320 (EDIASLEKKLGRLLTKQEKSR) and 728–765 (NLRQSLDQKKRSTEIELRRIKRIKEKFRVMNEKLNSHE).

Belongs to the TRAFAC class dynamin-like GTPase superfamily. Dynamin/Fzo/YdjA family. As to quaternary structure, forms a homodimer and heterodimers with DRP3A and DRP3B on peroxisomes. Also interacts with FIS1A (but not FIS1B) and PEX11 proteins (PEX11A, PEX11B, PEX11C, PEX11D and PEX11E) on peroxisomes. Interacts with PDV1 and PDV2. In terms of processing, stabilized at the plastid outer envelope membranes (OEMs) in the constriction site when in complex with GTP, but destabilized after conversion of GTP into GDP leading to turnover with a cytosolic pool.

It localises to the cytoplasm. It is found in the plastid. The protein localises to the chloroplast outer membrane. The protein resides in the peroxisome. Its subcellular location is the cytosol. It catalyses the reaction GTP + H2O = GDP + phosphate + H(+). With respect to regulation, GTPase activity is repressed by PDV2 thus increasing stability at the plastid outer envelope membranes (OEMs) periphery. In terms of biological role, mechanochemical GTPase component of both plastid and peroxisome division machinery. Required for the last steps of plastid division specifically in mesophyll-cell, when the narrow isthmus breaks, facilitating the separation of the daughter plastids. Necessary for peroxisome activities. Seems to influence stromule (stroma-filled tubular extensions of the plastid envelope membrane) length and frequency. In Arabidopsis thaliana (Mouse-ear cress), this protein is Dynamin-like protein ARC5.